The sequence spans 116 residues: Prefoldin subunit beta (116 aa).

It belongs to the prefoldin subunit beta family. As to quaternary structure, heterohexamer of two alpha and four beta subunits.

It localises to the cytoplasm. In terms of biological role, molecular chaperone capable of stabilizing a range of proteins. Seems to fulfill an ATP-independent, HSP70-like function in archaeal de novo protein folding. In Methanobrevibacter smithii (strain ATCC 35061 / DSM 861 / OCM 144 / PS), this protein is Prefoldin subunit beta.